A 100-amino-acid chain; its full sequence is uncharacterized protein (100 aa).

A signal peptide spans 1–18 (MWGFLVLKARWLVTPVRT). The tract at residues 48–86 (LTRGVIRVSPQERSQQNQSAPKGPTPSTRPKPRTLGPQA) is disordered. Positions 58–69 (QERSQQNQSAPK) are enriched in polar residues. Asn-64 carries an N-linked (GlcNAc...) asparagine glycan.

It is found in the secreted. This is an uncharacterized protein from Homo sapiens (Human).